The primary structure comprises 301 residues: Bifunctional protein FolD (301 aa).

NADP(+) contacts are provided by residues 166–168, S191, and I232; that span reads GKS.

It belongs to the tetrahydrofolate dehydrogenase/cyclohydrolase family. In terms of assembly, homodimer.

The enzyme catalyses (6R)-5,10-methylene-5,6,7,8-tetrahydrofolate + NADP(+) = (6R)-5,10-methenyltetrahydrofolate + NADPH. It carries out the reaction (6R)-5,10-methenyltetrahydrofolate + H2O = (6R)-10-formyltetrahydrofolate + H(+). It participates in one-carbon metabolism; tetrahydrofolate interconversion. In terms of biological role, catalyzes the oxidation of 5,10-methylenetetrahydrofolate to 5,10-methenyltetrahydrofolate and then the hydrolysis of 5,10-methenyltetrahydrofolate to 10-formyltetrahydrofolate. The polypeptide is Bifunctional protein FolD (Orientia tsutsugamushi (strain Ikeda) (Rickettsia tsutsugamushi)).